We begin with the raw amino-acid sequence, 70 residues long: Prokaryotic ubiquitin-like protein UBact (70 aa).

Basic and acidic residues-rich tracts occupy residues 1 to 15 (MPDQ…RKQG) and 24 to 50 (TRHD…RDPG). The segment at 1 to 70 (MPDQRQQERS…RQQRREQSGE (70 aa)) is disordered. E70 participates in a covalent cross-link: Isoglutamyl lysine isopeptide (Glu-Lys) (interchain with K-? in acceptor proteins).

The protein belongs to the ubiquitin-like protein UBact family.

Its function is as follows. May function as a protein modifier covalently attached to lysine residues of substrate proteins. This may serve to target the modified proteins for degradation by proteasomes. In Terrybacteria sp. (strain RIFCSPHIGHO2_01_FULL_58_15), this protein is Prokaryotic ubiquitin-like protein UBact.